The chain runs to 409 residues: Endoglucanase B (409 aa).

Substrate contacts are provided by residues His-61, 65–66, Tyr-92, and His-127; that span reads WY. Glu-165 acts as the Proton donor in catalysis. Residue Tyr-228 participates in substrate binding. Glu-254 acts as the Nucleophile in catalysis. Substrate contacts are provided by residues 260-261, Trp-288, and 293-295; these read AT and KDE. The interval 326 to 372 is disordered; the sequence is IRESATTPPSDPTPPSDPDPGEPEPDPGEPDPTPPSDPGDYPAWDPN. Pro residues predominate over residues 334 to 343; sequence PSDPTPPSDP. The segment covering 344–354 has biased composition (acidic residues); it reads DPGEPEPDPGE.

It belongs to the glycosyl hydrolase 5 (cellulase A) family.

It catalyses the reaction Endohydrolysis of (1-&gt;4)-beta-D-glucosidic linkages in cellulose, lichenin and cereal beta-D-glucans.. The polypeptide is Endoglucanase B (celB) (Evansella cellulosilytica (strain ATCC 21833 / DSM 2522 / FERM P-1141 / JCM 9156 / N-4) (Bacillus cellulosilyticus)).